We begin with the raw amino-acid sequence, 222 residues long: Zinc finger C2HC domain-containing protein 1B (222 aa).

Residues 14–43 (ELFPCEVCGRRFAADVLERHGPICKKLFNR) form a C2HC/C3H-type 1 zinc finger. Residues cysteine 18, cysteine 21, histidine 33, and cysteine 37 each coordinate Zn(2+). Residues 48–78 (FSSLKQRLQGTDIPTVKKTPQSKSPPVRKSN) form a disordered region. Residues 117 to 146 (DYIQRPYCMRRFNESAAERHTNFCKDQSSR) form a C2HC/C3H-type 2; degenerate zinc finger. The tract at residues 196–222 (PTKSGLAMDPASGAKLRQGFSKSSKKD) is disordered.

It belongs to the ZC2HC1 family. Zn(2+) is required as a cofactor.

This is Zinc finger C2HC domain-containing protein 1B (ZC2HC1B) from Homo sapiens (Human).